The primary structure comprises 95 residues: MSDDGGGRKNLRMPEDDEVFAEVTDMLGANRVQVRCADGEERTARIPGRMQKRIWIREDDIVLVEPWDWQDDKADVTWRYEKSDADQLREEGHIE.

Residues 7 to 81 (GRKNLRMPED…DKADVTWRYE (75 aa)) enclose the S1-like domain.

It belongs to the eIF-1A family.

Functionally, seems to be required for maximal rate of protein biosynthesis. Enhances ribosome dissociation into subunits and stabilizes the binding of the initiator Met-tRNA(I) to 40 S ribosomal subunits. In Halobacterium salinarum (strain ATCC 29341 / DSM 671 / R1), this protein is Translation initiation factor 1A (eIF1A).